The chain runs to 2055 residues: Citron rho-interacting kinase (2055 aa).

In terms of domain architecture, Protein kinase spans 97-359; it reads FEVRSLVGCG…FEGLCCHPFF (263 aa). ATP contacts are provided by residues 103–111 and Lys-126; that span reads VGCGHFAEV. Asp-221 serves as the catalytic Proton acceptor. One can recognise an AGC-kinase C-terminal domain in the interval 360–430; that stretch reads ARTDWNNIRN…SKALGYLGRS (71 aa). Residues 375–398 form a disordered region; the sequence is VPTLKSDDDTSNFDEPEKNSWVSS. 3 coiled-coil regions span residues 457-747, 773-1238, and 1284-1318; these read LQDS…AQVS, IKKD…LEYQ, and YNELKLALEKEKARCAELEEALQKTRIELRSAREE. Residues 1349–1376 are disordered; it reads PEHQPSAMSLLAPPSSRRKEASTPEEFS. Low complexity predominate over residues 1353-1363; the sequence is PSAMSLLAPPS. Residues 1365-1376 are compositionally biased toward basic and acidic residues; that stretch reads RRKEASTPEEFS. The Phorbol-ester/DAG-type zinc-finger motif lies at 1388-1437; that stretch reads PHRFNVGLNMRATKCAVCLDTVHFGRQASKCLECQVMCHPKCSTCLPATC. The PH domain occupies 1469-1589; that stretch reads SLHLEGWMKV…WVTALESVVA (121 aa). The CNH domain maps to 1617–1907; the sequence is RLDMNCTLPF…RYLGPAISSG (291 aa). The segment at 1932-2040 is disordered; the sequence is SGTEQHRVPS…RGRLPAGAVR (109 aa). Positions 1939-1948 are enriched in polar residues; the sequence is VPSTSRSSPN. The segment covering 1974–2031 has biased composition (basic and acidic residues); that stretch reads SHPREPSTPHRYRDREGRTELRRDKSPGRPLEREKSPGRMLSTRRERSPGRLFEDSSR.

It belongs to the protein kinase superfamily. AGC Ser/Thr protein kinase family. As to quaternary structure, homodimer. Directly interacts with KIF14 depending on the activation state (stronger interaction with the kinase-dead form). Interacts with TTC3.

The protein resides in the cytoplasm. It carries out the reaction L-seryl-[protein] + ATP = O-phospho-L-seryl-[protein] + ADP + H(+). It catalyses the reaction L-threonyl-[protein] + ATP = O-phospho-L-threonyl-[protein] + ADP + H(+). In terms of biological role, plays a role in cytokinesis. Required for KIF14 localization to the central spindle and midbody. Putative RHO/RAC effector that binds to the GTP-bound forms of RHO and RAC1. It probably binds p21 with a tighter specificity in vivo. Displays serine/threonine protein kinase activity. Plays an important role in the regulation of cytokinesis and the development of the central nervous system. Phosphorylates MYL9/MLC2. This chain is Citron rho-interacting kinase, found in Rattus norvegicus (Rat).